The sequence spans 187 residues: V-type ATP synthase subunit E (187 aa).

The protein belongs to the V-ATPase E subunit family.

Its function is as follows. Produces ATP from ADP in the presence of a proton gradient across the membrane. The sequence is that of V-type ATP synthase subunit E from Clostridioides difficile (strain 630) (Peptoclostridium difficile).